The following is a 538-amino-acid chain: Calcium-dependent protein kinase 3 (538 aa).

The tract at residues 23–70 is disordered; that stretch reads PKKSIERIKKKKDSNKSIKSQHKFEGSKISNKNNELKDVKSKDPKNYE. A compositionally biased stretch (basic and acidic residues) spans 56 to 68; that stretch reads NELKDVKSKDPKN. In terms of domain architecture, Protein kinase spans 112–367; that stretch reads NLSEEPLGKG…ASEALKHPWF (256 aa). Residues 118–126 and Lys-141 each bind ATP; that span reads LGKGTYGCV. Asp-232 (proton acceptor) is an active-site residue. Positions 387–395 match the J domain autoinhibitory motif motif; the sequence is NFKNYALLL. Residues 387–422 form a j domain region; that stretch reads NFKNYALLLKLQKLAMTIIAQQSNDYDLQQLKAVFL. Residues 396 to 405 carry the J domain EF-hand interaction motif motif; it reads KLQKLAMTII. EF-hand domains follow at residues 412 to 447, 450 to 481, and 482 to 517; these read YDLQQLKAVFLYLDEDGKGNITKNQLKKGLENSGLK, QNFDVLLDQIDSDGSGRIDYTEFLAAALDRKH, and LSKKLIYCAFRVFDVDNDGEITTAELAHVTFFVILF. Asp-460, Asp-462, Ser-464, Arg-466, Glu-471, Asp-495, Asp-497, Asp-499, Glu-501, and Glu-506 together coordinate Ca(2+).

Belongs to the protein kinase superfamily. Ser/Thr protein kinase family. CDPK subfamily. Requires Mg(2+) as cofactor.

It is found in the cytoplasm. The catalysed reaction is L-seryl-[protein] + ATP = O-phospho-L-seryl-[protein] + ADP + H(+). It carries out the reaction L-threonyl-[protein] + ATP = O-phospho-L-threonyl-[protein] + ADP + H(+). Activated by calcium. Upon calcium binding to the EF-hand domain 2, the C-terminus of the junction domain (J domain) undergoes a conformational change which results in the dissociation of the pseudo-substrate inhibitory motif from the catalytic domain. This, in turn, may facilitate the autophosphorylation of the activation loop at Thr-273, which leads to the kinase activation. Calcium-dependent protein kinase which acts as a sensor and effector of intracellular Ca(2+) levels probably in part downstream of cGMP-activated PKG kinase. In the mosquito midgut, regulates the gliding motility of the ookinete which is essential for the ookinete to invade the midgut epithelium. However, another study showed that while required for ookinete invasion of the midgut epithelium, is not required for ookinete gliding motility. The protein is Calcium-dependent protein kinase 3 of Plasmodium yoelii yoelii.